A 151-amino-acid polypeptide reads, in one-letter code: MSEQGSYDIQQVLKALPHRYPLLLVDRVKSMDLGERIHAVKGVTMNEEFFQGHFPGAPIMPGVLQVEAMAQAAAILGIETLELAGTGKLVFFMGIENAKFRKPVTPGCLLDLEVEFTQKRSRVYKFRGKASVEGVTTSEAEFTAMIADPPA.

H53 is a catalytic residue.

The protein belongs to the thioester dehydratase family. FabZ subfamily.

The protein localises to the cytoplasm. It carries out the reaction a (3R)-hydroxyacyl-[ACP] = a (2E)-enoyl-[ACP] + H2O. Involved in unsaturated fatty acids biosynthesis. Catalyzes the dehydration of short chain beta-hydroxyacyl-ACPs and long chain saturated and unsaturated beta-hydroxyacyl-ACPs. This is 3-hydroxyacyl-[acyl-carrier-protein] dehydratase FabZ from Erythrobacter litoralis (strain HTCC2594).